The following is a 300-amino-acid chain: Cation-efflux pump FieF (300 aa).

The chain crosses the membrane as a helical span at residues 24–44 (LLIKIFAWWYTGSVSILAALV). The Zn(2+) site is built by D45 and D49. 2 helical membrane-spanning segments follow: residues 82–102 (AALAQSMFISGSALFLFLTGI) and 114–134 (AGVGVVVTLIALFSTLALVTF). H153 and D157 together coordinate Zn(2+). Transmembrane regions (helical) follow at residues 156–176 (SDVMMNGAILVALGLSWYGWH) and 178–198 (ADALFALGIGIYILYSALRMG).

The protein belongs to the cation diffusion facilitator (CDF) transporter (TC 2.A.4) family. FieF subfamily. As to quaternary structure, homodimer.

It is found in the cell inner membrane. It carries out the reaction Zn(2+)(in) + H(+)(out) = Zn(2+)(out) + H(+)(in). The enzyme catalyses Cd(2+)(in) + H(+)(out) = Cd(2+)(out) + H(+)(in). It catalyses the reaction Fe(2+)(in) + H(+)(out) = Fe(2+)(out) + H(+)(in). Divalent metal cation transporter which exports Zn(2+), Cd(2+) and possibly Fe(2+). May be involved in zinc and iron detoxification by efflux. The protein is Cation-efflux pump FieF of Klebsiella pneumoniae (strain 342).